The primary structure comprises 245 residues: 2,3-bisphosphoglycerate-dependent phosphoglycerate mutase (245 aa).

Substrate is bound by residues 8–15 (RHGQSLWN), 21–22 (TG), arginine 60, 87–90 (ERHY), lysine 98, 114–115 (RR), and 183–184 (GN). The active-site Tele-phosphohistidine intermediate is the histidine 9. Glutamate 87 functions as the Proton donor/acceptor in the catalytic mechanism.

It belongs to the phosphoglycerate mutase family. BPG-dependent PGAM subfamily.

The enzyme catalyses (2R)-2-phosphoglycerate = (2R)-3-phosphoglycerate. The protein operates within carbohydrate degradation; glycolysis; pyruvate from D-glyceraldehyde 3-phosphate: step 3/5. Its function is as follows. Catalyzes the interconversion of 2-phosphoglycerate and 3-phosphoglycerate. This Bacillus mycoides (strain KBAB4) (Bacillus weihenstephanensis) protein is 2,3-bisphosphoglycerate-dependent phosphoglycerate mutase.